Reading from the N-terminus, the 440-residue chain is Polyprenol-phosphate-mannose-dependent alpha-(1-2)-phosphatidylinositol mannoside mannosyltransferase (440 aa).

11 consecutive transmembrane segments (helical) span residues 15–35 (LAPT…VLWV), 87–107 (LAAI…SSAI), 109–129 (ATTL…LDVW), 144–161 (AWLA…LEPI), 164–184 (NFEF…DCVP), 193–213 (LLLG…LYFL), 224–244 (TAAT…SDSV), 281–301 (PRFI…VWAA), 316–336 (APVL…PVSW), 360–380 (VWFT…PITL), and 395–415 (LAGG…GLVS). The segment at 419-440 (THTGDAHETDEPLVPLARGEAG) is disordered.

Belongs to the glycosyltransferase 87 family.

It localises to the cell membrane. The protein operates within phospholipid metabolism; phosphatidylinositol metabolism. Functionally, responsible for the addition of alpha-(1-2) mannose branches to the linear mannan core on the biosynthetic pathway to mature Lipoarabinomannan (LAM). This chain is Polyprenol-phosphate-mannose-dependent alpha-(1-2)-phosphatidylinositol mannoside mannosyltransferase, found in Mycolicibacterium smegmatis (strain ATCC 700084 / mc(2)155) (Mycobacterium smegmatis).